The chain runs to 98 residues: NADH-ubiquinone oxidoreductase chain 4L (98 aa).

A run of 3 helical transmembrane segments spans residues 1–21 (MSLV…GLLM), 29–49 (SLLC…LMIL), and 61–81 (IILL…LVMV).

The protein belongs to the complex I subunit 4L family. As to quaternary structure, core subunit of respiratory chain NADH dehydrogenase (Complex I) which is composed of 45 different subunits.

The protein resides in the mitochondrion inner membrane. The catalysed reaction is a ubiquinone + NADH + 5 H(+)(in) = a ubiquinol + NAD(+) + 4 H(+)(out). Core subunit of the mitochondrial membrane respiratory chain NADH dehydrogenase (Complex I) which catalyzes electron transfer from NADH through the respiratory chain, using ubiquinone as an electron acceptor. Part of the enzyme membrane arm which is embedded in the lipid bilayer and involved in proton translocation. The protein is NADH-ubiquinone oxidoreductase chain 4L (MT-ND4L) of Capra hircus (Goat).